The chain runs to 709 residues: Potassium-transporting ATPase ATP-binding subunit (709 aa).

A run of 4 helical transmembrane segments spans residues 55 to 75 (VMLVVLVGAVITTLAFLRDLA), 86 to 106 (GLVAAFLWFTVLFANFAEAMA), 236 to 256 (IALNILLAGLTIIFLLAVVTL), and 269 to 289 (VVVLVALLVCLIPTTIGALLS). The 4-aspartylphosphate intermediate role is filled by aspartate 324. ATP-binding positions include aspartate 361, glutamate 365, 395–402 (FTAETRMS), and lysine 417. Positions 545 and 549 each coordinate Mg(2+). 3 helical membrane passes run 615–635 (FAIIPAMFVGLYPVLDKLNVM), 643–663 (AILSAVIFNALVIVALIPLAL), and 688–708 (GLVVPFIGIKLVDLVIVALGV).

It belongs to the cation transport ATPase (P-type) (TC 3.A.3) family. Type IA subfamily. As to quaternary structure, the system is composed of three essential subunits: KdpA, KdpB and KdpC.

The protein localises to the cell membrane. The enzyme catalyses K(+)(out) + ATP + H2O = K(+)(in) + ADP + phosphate + H(+). Functionally, part of the high-affinity ATP-driven potassium transport (or Kdp) system, which catalyzes the hydrolysis of ATP coupled with the electrogenic transport of potassium into the cytoplasm. This subunit is responsible for energy coupling to the transport system and for the release of the potassium ions to the cytoplasm. The sequence is that of Potassium-transporting ATPase ATP-binding subunit from Mycobacterium tuberculosis (strain ATCC 25618 / H37Rv).